The primary structure comprises 82 residues: Sec-independent protein translocase protein TatA (82 aa).

Residues 1–21 form a helical membrane-spanning segment; the sequence is MGGISVWQLLIIAVIVVLLFG. The interval 41–82 is disordered; the sequence is KAMSEDEPAKKDDKDADFEPKSLEEQQKKEAAPESKKDKEQA. Residues 42 to 82 show a composition bias toward basic and acidic residues; sequence AMSEDEPAKKDDKDADFEPKSLEEQQKKEAAPESKKDKEQA.

Belongs to the TatA/E family. As to quaternary structure, the Tat system comprises two distinct complexes: a TatABC complex, containing multiple copies of TatA, TatB and TatC subunits, and a separate TatA complex, containing only TatA subunits. Substrates initially bind to the TatABC complex, which probably triggers association of the separate TatA complex to form the active translocon.

The protein localises to the cell inner membrane. Part of the twin-arginine translocation (Tat) system that transports large folded proteins containing a characteristic twin-arginine motif in their signal peptide across membranes. TatA could form the protein-conducting channel of the Tat system. The sequence is that of Sec-independent protein translocase protein TatA from Vibrio campbellii (strain ATCC BAA-1116).